We begin with the raw amino-acid sequence, 379 residues long: Quinolinate synthase (379 aa).

Residues H60 and S81 each coordinate iminosuccinate. C126 contributes to the [4Fe-4S] cluster binding site. Residues 152–154 and S169 each bind iminosuccinate; that span reads YAN. Residue C213 participates in [4Fe-4S] cluster binding. Iminosuccinate-binding positions include 239–241 and T256; that span reads HPE. [4Fe-4S] cluster is bound at residue C310.

Belongs to the quinolinate synthase family. Type 1 subfamily. [4Fe-4S] cluster serves as cofactor.

Its subcellular location is the cytoplasm. It catalyses the reaction iminosuccinate + dihydroxyacetone phosphate = quinolinate + phosphate + 2 H2O + H(+). Its pathway is cofactor biosynthesis; NAD(+) biosynthesis; quinolinate from iminoaspartate: step 1/1. Its function is as follows. Catalyzes the condensation of iminoaspartate with dihydroxyacetone phosphate to form quinolinate. This Herminiimonas arsenicoxydans protein is Quinolinate synthase.